A 130-amino-acid chain; its full sequence is DNA-directed RNA polymerase subunit omega (130 aa).

Disordered regions lie at residues 79–98 (EPES…VDAD) and 108–130 (TEEE…EEDE).

Belongs to the RNA polymerase subunit omega family. As to quaternary structure, the RNAP catalytic core consists of 2 alpha, 1 beta, 1 beta' and 1 omega subunit. When a sigma factor is associated with the core the holoenzyme is formed, which can initiate transcription.

It catalyses the reaction RNA(n) + a ribonucleoside 5'-triphosphate = RNA(n+1) + diphosphate. Functionally, promotes RNA polymerase assembly. Latches the N- and C-terminal regions of the beta' subunit thereby facilitating its interaction with the beta and alpha subunits. The polypeptide is DNA-directed RNA polymerase subunit omega (Nitrobacter winogradskyi (strain ATCC 25391 / DSM 10237 / CIP 104748 / NCIMB 11846 / Nb-255)).